A 156-amino-acid chain; its full sequence is 3-hydroxyacyl-[acyl-carrier-protein] dehydratase FabZ (156 aa).

The active site involves His57.

It belongs to the thioester dehydratase family. FabZ subfamily.

The protein localises to the cytoplasm. It catalyses the reaction a (3R)-hydroxyacyl-[ACP] = a (2E)-enoyl-[ACP] + H2O. Involved in unsaturated fatty acids biosynthesis. Catalyzes the dehydration of short chain beta-hydroxyacyl-ACPs and long chain saturated and unsaturated beta-hydroxyacyl-ACPs. The polypeptide is 3-hydroxyacyl-[acyl-carrier-protein] dehydratase FabZ (Anaeromyxobacter sp. (strain K)).